We begin with the raw amino-acid sequence, 291 residues long: MSWLSKLMPSGIRTDNTPSKKRSVPEGLWEKCSNCGSALYRPELEENLEVCPKCGHHMAIRARARLAALFDADSTTEIAARLGPTDLLKFKDQKKYSERIKIAQKNTGEYDALIAMRGLLKGRALVASSFDFAFMGGSMGSVVGERFSLAAETAVEIGAPYVCFSQSGGARMQEGLFSLMQMAKTSAALGKLREAGLPFISVLTHPTTGGVSASFAMLGDINIAEPQALIGFAGPRVIEQTVREKLPEGFQRSEFLLEHGAIDQICDRREMRDRLADLLAMLGRQPAPEVA.

Residues 1–23 form a disordered region; the sequence is MSWLSKLMPSGIRTDNTPSKKRS. One can recognise a CoA carboxyltransferase N-terminal domain in the interval 28–291; that stretch reads LWEKCSNCGS…LGRQPAPEVA (264 aa). Cysteine 32, cysteine 35, cysteine 51, and cysteine 54 together coordinate Zn(2+). A C4-type zinc finger spans residues 32-54; the sequence is CSNCGSALYRPELEENLEVCPKC.

It belongs to the AccD/PCCB family. In terms of assembly, acetyl-CoA carboxylase is a heterohexamer composed of biotin carboxyl carrier protein (AccB), biotin carboxylase (AccC) and two subunits each of ACCase subunit alpha (AccA) and ACCase subunit beta (AccD). Zn(2+) is required as a cofactor.

The protein localises to the cytoplasm. It catalyses the reaction N(6)-carboxybiotinyl-L-lysyl-[protein] + acetyl-CoA = N(6)-biotinyl-L-lysyl-[protein] + malonyl-CoA. It functions in the pathway lipid metabolism; malonyl-CoA biosynthesis; malonyl-CoA from acetyl-CoA: step 1/1. Its function is as follows. Component of the acetyl coenzyme A carboxylase (ACC) complex. Biotin carboxylase (BC) catalyzes the carboxylation of biotin on its carrier protein (BCCP) and then the CO(2) group is transferred by the transcarboxylase to acetyl-CoA to form malonyl-CoA. The sequence is that of Acetyl-coenzyme A carboxylase carboxyl transferase subunit beta from Stenotrophomonas maltophilia (strain R551-3).